Reading from the N-terminus, the 966-residue chain is MLFAIGQRWISESENSLGLGIITGQDNRTVTISFPASDETRIYALASAPLTRVLFQKGDEITHQLGWKARVVDVMMRNELAFYLVQRLDNNEEIVVQEMELAHQISFSKPQDRLFSTQIDRNEHFVLRYKALKHQQEQFQSSLRGLRGNRAGLIPHQLHIAQEVGRRIAPRVLLADEVGLGKTIEAGMILQQQLLAEKVQRVLILVPETLQHQWLVEMLRRFNLHFSLFDEERCADFDNPEDHVEANPFVAENLIICALDWLVQQPKRAKQALAGEFDLLIVDEAHHLTWSEDSPSIAYELVMQLSAVIPAVLLLTATPEQLGQQSHFARLHLLDPNRFYSYRAFEKEQQQYQPVAKAVQSLLSEHILTVEEQNHLAELLSEQDIEPMLKVINSQADTEQKQVARGELMSNLIDRHGTGRLLFRNTRQGVQGFPHRIYHQIKLDLPTQYQNAINVLNMLGEIKDPELFYPEQIFQKMNADATWWRFDPRVDWLINLVKSLREEKILVICQDAITAIQLEQALREKEGIRSAVFHENMSIIERDRASAYFAQQEEGAQVLLSSSIGSEGRNFQFACHLVLFHLPNNPDLLEQCIGRLDRIGQRRDIQIYVPCFADTPQIRLAQWYHEGLNAFEETCPMGAILHEKCGAKLTEFLTSDTTDDFQAFIQQTHQQQLQLKSELEQGRDRLLELNSNGGEQAQQLANDIAIQDGSTELIDFTLNLFDIIGVEQEDLGEKSIVISPTGTMLVPDFPGLKEEGVTVTFDRDLALAREDLEFLTWDHPIVRNGIDLIVSGDIGKSAVALLVNKQLPTGTLLLELVYIIESQSPRGLQLTRFLPPTPLRLLLDIKGNDLSHQISFQGLQKQLKPMGKNMATKVIKIMRPAIEQLIKQSAKNVVEPAKMIIEQAKQLADQSLSAEINRLYALQAVNKNIRPEEIEQLESQRTLSLELLNQANWRLDSLRVIVSNKE.

The region spanning 163–337 (EVGRRIAPRV…FARLHLLDPN (175 aa)) is the Helicase ATP-binding domain. 176–183 (DEVGLGKT) contributes to the ATP binding site. A DEAH box motif is present at residues 283–286 (DEAH). In terms of domain architecture, Helicase C-terminal spans 489 to 643 (RVDWLINLVK…TCPMGAILHE (155 aa)).

The protein belongs to the SNF2/RAD54 helicase family. RapA subfamily. As to quaternary structure, interacts with the RNAP. Has a higher affinity for the core RNAP than for the holoenzyme. Its ATPase activity is stimulated by binding to RNAP.

In terms of biological role, transcription regulator that activates transcription by stimulating RNA polymerase (RNAP) recycling in case of stress conditions such as supercoiled DNA or high salt concentrations. Probably acts by releasing the RNAP, when it is trapped or immobilized on tightly supercoiled DNA. Does not activate transcription on linear DNA. Probably not involved in DNA repair. This chain is RNA polymerase-associated protein RapA, found in Histophilus somni (strain 129Pt) (Haemophilus somnus).